A 739-amino-acid chain; its full sequence is Long-chain-fatty-acid--CoA ligase ACSBG2 (739 aa).

ATP-binding positions include 287 to 295 (TSGTTGQPK), 478 to 483 (ELYGMS), D556, R571, and K684.

The protein belongs to the ATP-dependent AMP-binding enzyme family. Bubblegum subfamily.

The protein localises to the cytoplasm. It carries out the reaction a long-chain fatty acid + ATP + CoA = a long-chain fatty acyl-CoA + AMP + diphosphate. It catalyses the reaction (5Z,8Z,11Z,14Z)-eicosatetraenoate + ATP + CoA = (5Z,8Z,11Z,14Z)-eicosatetraenoyl-CoA + AMP + diphosphate. The enzyme catalyses hexadecanoate + ATP + CoA = hexadecanoyl-CoA + AMP + diphosphate. The catalysed reaction is (9Z)-octadecenoate + ATP + CoA = (9Z)-octadecenoyl-CoA + AMP + diphosphate. It carries out the reaction (9Z,12Z)-octadecadienoate + ATP + CoA = (9Z,12Z)-octadecadienoyl-CoA + AMP + diphosphate. It catalyses the reaction tetracosanoate + ATP + CoA = tetracosanoyl-CoA + AMP + diphosphate. Its function is as follows. Catalyzes the conversion of fatty acids such as long chain and very long-chain fatty acids to their active form acyl-CoAs for both synthesis of cellular lipids, and degradation via beta-oxidation. Can activate diverse saturated, monosaturated and polyunsaturated fatty acids. The polypeptide is Long-chain-fatty-acid--CoA ligase ACSBG2 (Xenopus laevis (African clawed frog)).